A 200-amino-acid polypeptide reads, in one-letter code: Ribosomal RNA large subunit methyltransferase E (200 aa).

5 residues coordinate S-adenosyl-L-methionine: glycine 49, tryptophan 51, aspartate 69, aspartate 87, and aspartate 111. Residue lysine 151 is the Proton acceptor of the active site.

This sequence belongs to the class I-like SAM-binding methyltransferase superfamily. RNA methyltransferase RlmE family.

It localises to the cytoplasm. The enzyme catalyses uridine(2552) in 23S rRNA + S-adenosyl-L-methionine = 2'-O-methyluridine(2552) in 23S rRNA + S-adenosyl-L-homocysteine + H(+). Its function is as follows. Specifically methylates the uridine in position 2552 of 23S rRNA at the 2'-O position of the ribose in the fully assembled 50S ribosomal subunit. The protein is Ribosomal RNA large subunit methyltransferase E of Lawsonia intracellularis (strain PHE/MN1-00).